A 660-amino-acid polypeptide reads, in one-letter code: UPF0603 protein MT2410 (660 aa).

The signal sequence occupies residues 1 to 26 (MRLVRLLGMVLTILAAGLLLGPPAGA). Residues 162–182 (VVLLVTVGIIVIVVAVLLVVM) form a helical membrane-spanning segment. Positions 488-567 (DQLTKVDADL…LEAAHDRKSS (80 aa)) form a coiled coil. The helical transmembrane segment at 605-625 (GGNNAGAILGGIIIGDLLSGG) threads the bilayer. A disordered region spans residues 638 to 660 (FGGSSNAPGSSPDGGFLGGGGRF).

Belongs to the UPF0603 family.

It localises to the cell membrane. May play a role in septum formation. The polypeptide is UPF0603 protein MT2410 (Mycobacterium tuberculosis (strain CDC 1551 / Oshkosh)).